The following is a 133-amino-acid chain: Small ribosomal subunit protein uS8 (133 aa).

The tract at residues 1 to 30 (MANHDPISDMLTRIRNASEKRHETTKVPAS) is disordered. Basic and acidic residues predominate over residues 16-25 (NASEKRHETT).

Belongs to the universal ribosomal protein uS8 family. As to quaternary structure, part of the 30S ribosomal subunit. Contacts proteins S5 and S12.

In terms of biological role, one of the primary rRNA binding proteins, it binds directly to 16S rRNA central domain where it helps coordinate assembly of the platform of the 30S subunit. This is Small ribosomal subunit protein uS8 from Synechococcus sp. (strain CC9902).